Reading from the N-terminus, the 205-residue chain is MQEYNQPLRIGVGGPVGSGKTALLEVLCKAMRDTYQIAVVTNDIYTQEDAKILTRAEALDADRIIGVETGGCPHTAIREDASMNLAAVEELAIRHKNLDIVFVESGGDNLSATFSPELADLTIYVIDVAEGEKIPRKGGPGITHSDLLVINKIDLAPYVGASLEVMEADTARMRPVKPYVFTNLKKKVGLETIIEFIIDKGMLGR.

Residue 14–21 coordinates GTP; that stretch reads GPVGSGKT.

It belongs to the SIMIBI class G3E GTPase family. UreG subfamily. Homodimer. UreD, UreF and UreG form a complex that acts as a GTP-hydrolysis-dependent molecular chaperone, activating the urease apoprotein by helping to assemble the nickel containing metallocenter of UreC. The UreE protein probably delivers the nickel.

The protein resides in the cytoplasm. Facilitates the functional incorporation of the urease nickel metallocenter. This process requires GTP hydrolysis, probably effectuated by UreG. The protein is Urease accessory protein UreG of Escherichia coli.